Reading from the N-terminus, the 982-residue chain is Nitrate reductase [NADPH] (982 aa).

The disordered stretch occupies residues 1-128; sequence MEAPALEQRQ…PPSTRLTTIL (128 aa). Over residues 10–20 the composition is skewed to basic and acidic residues; it reads QSLHDSSERQQ. A compositionally biased stretch (low complexity) spans 63 to 110; it reads TASPTTTDFSSSSSDDNSTTLETSVNYSHSSNTNTNTSCPPSPITSSS. C240 lines the Mo-molybdopterin pocket. Residues 617 to 692 form the Cytochrome b5 heme-binding domain; the sequence is TRLITLEELR…MPTYHIGTLT (76 aa). Residues H652 and H675 each contribute to the heme site. The region spanning 721 to 836 is the FAD-binding FR-type domain; it reads KTWNSAILTF…KGPVGKFVYQ (116 aa). FAD is bound by residues 776 to 779, 794 to 798, 810 to 812, S860, and T863; these read RAYT, LVKIY, and QMT. 952–961 lines the NADP(+) pocket; sequence MVLLCGPEGM.

This sequence belongs to the nitrate reductase family. Homodimer. The cofactor is FAD. Heme serves as cofactor. Requires Mo-molybdopterin as cofactor.

It catalyses the reaction nitrite + NADP(+) + H2O = nitrate + NADPH + H(+). It functions in the pathway nitrogen metabolism; nitrate reduction (assimilation). In terms of biological role, nitrate reductase is a key enzyme involved in the first step of nitrate assimilation in plants, fungi and bacteria. The polypeptide is Nitrate reductase [NADPH] (nit-3) (Neurospora crassa (strain ATCC 24698 / 74-OR23-1A / CBS 708.71 / DSM 1257 / FGSC 987)).